Here is a 301-residue protein sequence, read N- to C-terminus: MEDEVIRIAKKMDKMVQKKNAAGALDLLKELKNIPMTLELLQSTRIGMSVNAIRKQSTDEEVTSLAKSLIKSWKKLLDGPSTDKDSEEKKKDTAVTSQNSPEAREESSSSGNMSSRKDETNARDTYVSSFPRAPSTSDSVRLKCREMLAAALRTGDDYIAIGADEEELGSQIEEAIYQEIRNTDMKYKNRVRSRISNLKDAKNPNLRKNVLCGNIPPDLFARMTAEEMASDELKEMRKNLTKEAIREHQMAKTGGTQTDLFTCGKCKKKNCTYTQVQTRSADEPMTTFVVCNECGNRWKFC.

M1 carries the N-acetylmethionine modification. Residues 3–80 (DEVIRIAKKM…KSWKKLLDGP (78 aa)) enclose the TFIIS N-terminal domain. K55 participates in a covalent cross-link: Glycyl lysine isopeptide (Lys-Gly) (interchain with G-Cter in ubiquitin). A phosphoserine mark is found at S57, S81, S97, and S100. A compositionally biased stretch (basic and acidic residues) spans 76–93 (LLDGPSTDKDSEEKKKDT). A disordered region spans residues 76–139 (LLDGPSTDKD…FPRAPSTSDS (64 aa)). In terms of domain architecture, TFIIS central spans 140–256 (VRLKCREMLA…EHQMAKTGGT (117 aa)). The TFIIS-type zinc finger occupies 259 to 299 (DLFTCGKCKKKNCTYTQVQTRSADEPMTTFVVCNECGNRWK). Zn(2+)-binding residues include C263, C266, C291, and C294.

The protein belongs to the TFS-II family. In terms of assembly, interacts with EAF2. Associates with UBR5 and forms a transcription regulatory complex made of CDK9, Pol II, UBR5 and TCEA1/TFIIS. Part of TBP-based Pol II pre-initiation complex (PIC), in which Pol II core assembles with general transcription factors and other specific initiation factors including GTF2E1, GTF2E2, GTF2F1, GTF2F2, TCEA1, ERCC2, ERCC3, GTF2H2, GTF2H3, GTF2H4, GTF2H5, GTF2A1, GTF2A2, GTF2B and TBP; this large multi-subunit PIC complex mediates DNA unwinding and targets Pol II core to the transcription start site where the first phosphodiester bond forms.

It localises to the nucleus. Necessary for efficient RNA polymerase II transcription elongation past template-encoded arresting sites. The arresting sites in DNA have the property of trapping a certain fraction of elongating RNA polymerases that pass through, resulting in locked ternary complexes. Cleavage of the nascent transcript by S-II allows the resumption of elongation from the new 3'-terminus. This Bos taurus (Bovine) protein is Transcription elongation factor A protein 1 (TCEA1).